Here is a 1387-residue protein sequence, read N- to C-terminus: Kinesin-like protein KIF15 (1387 aa).

The disordered stretch occupies residues 1 to 23 (MAPGCKSELRNVTNSHSNQPSNE). The span at 10 to 22 (RNVTNSHSNQPSN) shows a compositional bias: polar residues. The 338-residue stretch at 26–363 (AIKVFVRIRP…LNFAQRAKLI (338 aa)) folds into the Kinesin motor domain. 109-116 (GQTGSGKT) contacts ATP. Residues 368–1132 (VVNEDTQGNV…LKMRQLEHVM (765 aa)) are a coiled coil. S568 bears the Phosphoserine mark. Residue K1009 is modified to N6-acetyllysine. S1141 and S1169 each carry phosphoserine.

Belongs to the TRAFAC class myosin-kinesin ATPase superfamily. Kinesin family. KLP2 subfamily. Interacts with MKI67 and TPX2. Expressed in brain (neurons in the external germinal layer of the cerebellum and in ventricular zones) (at protein level). Expressed in spleen and testis.

The protein localises to the cytoplasm. It is found in the cytoskeleton. Its subcellular location is the spindle. Plus-end directed kinesin-like motor enzyme involved in mitotic spindle assembly. The sequence is that of Kinesin-like protein KIF15 (Kif15) from Mus musculus (Mouse).